The sequence spans 311 residues: Ribosomal RNA small subunit methyltransferase H (311 aa).

Residues 33 to 35 (GGH), D51, F78, D99, and Q106 each bind S-adenosyl-L-methionine. The tract at residues 289-311 (EEIEKNRRAHSAKLRAAEKLSFA) is disordered.

The protein belongs to the methyltransferase superfamily. RsmH family.

Its subcellular location is the cytoplasm. The enzyme catalyses cytidine(1402) in 16S rRNA + S-adenosyl-L-methionine = N(4)-methylcytidine(1402) in 16S rRNA + S-adenosyl-L-homocysteine + H(+). Functionally, specifically methylates the N4 position of cytidine in position 1402 (C1402) of 16S rRNA. The sequence is that of Ribosomal RNA small subunit methyltransferase H from Carboxydothermus hydrogenoformans (strain ATCC BAA-161 / DSM 6008 / Z-2901).